The sequence spans 252 residues: Small ribosomal subunit protein uS2A (252 aa).

An N-acetylserine modification is found at serine 2. The tract at residues 209-252 (EVEQQAAEETTSTGADAEESKEEVAEGQNEASEWAEENTEAVSW) is disordered. Positions 241–252 (EWAEENTEAVSW) are enriched in acidic residues.

This sequence belongs to the universal ribosomal protein uS2 family. In terms of assembly, component of the small ribosomal subunit. Mature ribosomes consist of a small (40S) and a large (60S) subunit. The 40S subunit contains about 33 different proteins and 1 molecule of RNA (18S). The 60S subunit contains about 49 different proteins and 3 molecules of RNA (25S, 5.8S and 5S). Interacts with RPS21.

The protein resides in the cytoplasm. Its function is as follows. Required for the assembly and/or stability of the 40S ribosomal subunit. Required for the processing of the 20S rRNA-precursor to mature 18S rRNA in a late step of the maturation of 40S ribosomal subunits. This chain is Small ribosomal subunit protein uS2A, found in Vanderwaltozyma polyspora (strain ATCC 22028 / DSM 70294 / BCRC 21397 / CBS 2163 / NBRC 10782 / NRRL Y-8283 / UCD 57-17) (Kluyveromyces polysporus).